The following is a 179-amino-acid chain: Large ribosomal subunit protein uL5 (179 aa).

Belongs to the universal ribosomal protein uL5 family. Part of the 50S ribosomal subunit; part of the 5S rRNA/L5/L18/L25 subcomplex. Contacts the 5S rRNA and the P site tRNA. Forms a bridge to the 30S subunit in the 70S ribosome.

Functionally, this is one of the proteins that bind and probably mediate the attachment of the 5S RNA into the large ribosomal subunit, where it forms part of the central protuberance. In the 70S ribosome it contacts protein S13 of the 30S subunit (bridge B1b), connecting the 2 subunits; this bridge is implicated in subunit movement. Contacts the P site tRNA; the 5S rRNA and some of its associated proteins might help stabilize positioning of ribosome-bound tRNAs. This Haemophilus influenzae (strain 86-028NP) protein is Large ribosomal subunit protein uL5.